A 522-amino-acid polypeptide reads, in one-letter code: Lysophospholipid acyltransferase LPCAT4 (522 aa).

2 helical membrane-spanning segments follow: residues 43–63 (ILGF…LFLM) and 92–112 (HLIY…WITI). An HXXXXD motif motif is present at residues 130-135 (HSTFFD). Residues N166 and N517 are each glycosylated (N-linked (GlcNAc...) asparagine). The segment at 496 to 522 (GRRKPPHIQQNGGCSGKNNPRNQSKMD) is disordered. Residues 503–522 (IQQNGGCSGKNNPRNQSKMD) show a composition bias toward polar residues.

This sequence belongs to the 1-acyl-sn-glycerol-3-phosphate acyltransferase family.

It is found in the endoplasmic reticulum membrane. It carries out the reaction a 1-acyl-sn-glycero-3-phosphoethanolamine + an acyl-CoA = a 1,2-diacyl-sn-glycero-3-phosphoethanolamine + CoA. It catalyses the reaction a 1-O-(1Z-alkenyl)-sn-glycero-3-phosphoethanolamine + an acyl-CoA = a 1-O-(1Z-alkenyl)-2-acyl-sn-glycero-3-phosphoethanolamine + CoA. The catalysed reaction is a 1-acyl-sn-glycero-3-phosphocholine + an acyl-CoA = a 1,2-diacyl-sn-glycero-3-phosphocholine + CoA. The enzyme catalyses a 1-O-alkyl-sn-glycero-3-phosphocholine + acetyl-CoA = a 1-O-alkyl-2-acetyl-sn-glycero-3-phosphocholine + CoA. It carries out the reaction a 1-acyl-sn-glycero-3-phospho-L-serine + an acyl-CoA = a 1,2-diacyl-sn-glycero-3-phospho-L-serine + CoA. It functions in the pathway lipid metabolism; phospholipid metabolism. Its function is as follows. Displays acyl-CoA-dependent lysophospholipid acyltransferase activity with a subset of lysophospholipids as substrates. Prefers long chain acyl-CoAs (C16, C18) as acyl donors. This Xenopus tropicalis (Western clawed frog) protein is Lysophospholipid acyltransferase LPCAT4 (lpcat4).